A 491-amino-acid chain; its full sequence is Galactose-1-phosphate uridylyltransferase 1 (491 aa).

It belongs to the galactose-1-phosphate uridylyltransferase type 2 family.

The protein localises to the cytoplasm. It catalyses the reaction alpha-D-galactose 1-phosphate + UDP-alpha-D-glucose = alpha-D-glucose 1-phosphate + UDP-alpha-D-galactose. It participates in carbohydrate metabolism; galactose metabolism. In Streptococcus pneumoniae serotype 4 (strain ATCC BAA-334 / TIGR4), this protein is Galactose-1-phosphate uridylyltransferase 1 (galT1).